Here is a 162-residue protein sequence, read N- to C-terminus: Xanthine-guanine phosphoribosyltransferase (162 aa).

Residues 41 to 42 and 92 to 100 each bind 5-phospho-alpha-D-ribose 1-diphosphate; these read RG and DDLVDTGNT. A Mg(2+)-binding site is contributed by Asp93. Guanine is bound by residues Asp96 and Ile139. Xanthine contacts are provided by Asp96 and Ile139. Residues 96-100 and 138-139 contribute to the GMP site; these read DTGNT and WI.

Belongs to the purine/pyrimidine phosphoribosyltransferase family. XGPT subfamily. As to quaternary structure, homotetramer. Requires Mg(2+) as cofactor.

The protein resides in the cell inner membrane. It carries out the reaction GMP + diphosphate = guanine + 5-phospho-alpha-D-ribose 1-diphosphate. It catalyses the reaction XMP + diphosphate = xanthine + 5-phospho-alpha-D-ribose 1-diphosphate. The catalysed reaction is IMP + diphosphate = hypoxanthine + 5-phospho-alpha-D-ribose 1-diphosphate. It participates in purine metabolism; GMP biosynthesis via salvage pathway; GMP from guanine: step 1/1. It functions in the pathway purine metabolism; XMP biosynthesis via salvage pathway; XMP from xanthine: step 1/1. Purine salvage pathway enzyme that catalyzes the transfer of the ribosyl-5-phosphate group from 5-phospho-alpha-D-ribose 1-diphosphate (PRPP) to the N9 position of the 6-oxopurines guanine and xanthine to form the corresponding ribonucleotides GMP (guanosine 5'-monophosphate) and XMP (xanthosine 5'-monophosphate), with the release of PPi. To a lesser extent, also acts on hypoxanthine. The protein is Xanthine-guanine phosphoribosyltransferase of Chromohalobacter salexigens (strain ATCC BAA-138 / DSM 3043 / CIP 106854 / NCIMB 13768 / 1H11).